A 118-amino-acid chain; its full sequence is Large ribosomal subunit protein bL20 (118 aa).

Belongs to the bacterial ribosomal protein bL20 family.

Binds directly to 23S ribosomal RNA and is necessary for the in vitro assembly process of the 50S ribosomal subunit. It is not involved in the protein synthesizing functions of that subunit. This is Large ribosomal subunit protein bL20 from Pseudomonas entomophila (strain L48).